The sequence spans 256 residues: MTDLKKAAQRAIELMDLTTLNDDDTDQKVIDLCHKAVTPAGNTAAICIYPRFIPIARKTLDELGAEDIQIATVTNFPHGNDDIAIAVLETRAAVAYGADEVDVVFPYRALMEGNESVGYELVKACKEACGDVLLKVIIESGVLADPALIRRASELSIDAGADFIKTSTGKVPVNATLEAAEIMLTVISEKNTKVGFKPAGGVRDAAQAAEFLGVAERILGADWVSPRTFRFGASSLLNSLLHTLELADAPKPTQGY.

Asp-102 functions as the Proton donor/acceptor in the catalytic mechanism. Lys-165 acts as the Schiff-base intermediate with acetaldehyde in catalysis. Catalysis depends on Lys-197, which acts as the Proton donor/acceptor.

It belongs to the DeoC/FbaB aldolase family. DeoC type 2 subfamily.

The protein resides in the cytoplasm. The enzyme catalyses 2-deoxy-D-ribose 5-phosphate = D-glyceraldehyde 3-phosphate + acetaldehyde. The protein operates within carbohydrate degradation; 2-deoxy-D-ribose 1-phosphate degradation; D-glyceraldehyde 3-phosphate and acetaldehyde from 2-deoxy-alpha-D-ribose 1-phosphate: step 2/2. In terms of biological role, catalyzes a reversible aldol reaction between acetaldehyde and D-glyceraldehyde 3-phosphate to generate 2-deoxy-D-ribose 5-phosphate. In Shewanella sp. (strain ANA-3), this protein is Deoxyribose-phosphate aldolase.